The following is a 1183-amino-acid chain: DNA-directed RNA polymerase subunit beta (1183 aa).

It belongs to the RNA polymerase beta chain family. The RNAP catalytic core consists of 2 alpha, 1 beta, 1 beta' and 1 omega subunit. When a sigma factor is associated with the core the holoenzyme is formed, which can initiate transcription.

The enzyme catalyses RNA(n) + a ribonucleoside 5'-triphosphate = RNA(n+1) + diphosphate. In terms of biological role, DNA-dependent RNA polymerase catalyzes the transcription of DNA into RNA using the four ribonucleoside triphosphates as substrates. This is DNA-directed RNA polymerase subunit beta from Staphylococcus aureus (strain MRSA252).